The chain runs to 461 residues: UDP-glycosyltransferase 88B1 (461 aa).

Residues Ser-278, 340-341 (WA), 358-366 (HCGWNSSLE), and 380-383 (YAEQ) contribute to the UDP-alpha-D-glucose site.

It belongs to the UDP-glycosyltransferase family.

May glycosylate diterpenes or flavonols in leaves. The protein is UDP-glycosyltransferase 88B1 of Stevia rebaudiana (Stevia).